The primary structure comprises 242 residues: 1-(5-phosphoribosyl)-5-[(5-phosphoribosylamino)methylideneamino] imidazole-4-carboxamide isomerase (242 aa).

Residue aspartate 8 is the Proton acceptor of the active site. The active-site Proton donor is the aspartate 129.

This sequence belongs to the HisA/HisF family.

Its subcellular location is the cytoplasm. It catalyses the reaction 1-(5-phospho-beta-D-ribosyl)-5-[(5-phospho-beta-D-ribosylamino)methylideneamino]imidazole-4-carboxamide = 5-[(5-phospho-1-deoxy-D-ribulos-1-ylimino)methylamino]-1-(5-phospho-beta-D-ribosyl)imidazole-4-carboxamide. It participates in amino-acid biosynthesis; L-histidine biosynthesis; L-histidine from 5-phospho-alpha-D-ribose 1-diphosphate: step 4/9. The polypeptide is 1-(5-phosphoribosyl)-5-[(5-phosphoribosylamino)methylideneamino] imidazole-4-carboxamide isomerase (Clostridium botulinum (strain Kyoto / Type A2)).